A 582-amino-acid polypeptide reads, in one-letter code: External alternative NADH-ubiquinone oxidoreductase, mitochondrial (582 aa).

A mitochondrion-targeting transit peptide spans 1-30 (MLRLRPAVRAVSVARSVALTRSLHVSVAKF). Residues 46–65 (KQTAGHQGHHQEIPKPDENH) are disordered. Over residues 54-65 (HHQEIPKPDENH) the composition is skewed to basic and acidic residues. Residue 114 to 144 (TLVVLGSGWGSVSFLKKLDTSNYNVIVVSPR) coordinates FAD. An NAD(+)-binding site is contributed by 277 to 313 (LHTVVVGGGPTGVEFAAELQDFFEDDLRKWIPDIRDD). A coiled-coil region spans residues 454–501 (LLNGIAKTEDLNNEITNLEKQSEHTFDEQERKNIFAQLESKSRKLRRS).

This sequence belongs to the NADH dehydrogenase family. Requires FAD as cofactor.

The protein localises to the mitochondrion inner membrane. The catalysed reaction is a quinone + NADH + H(+) = a quinol + NAD(+). The enzyme catalyses a ubiquinone + NADH + H(+) = a ubiquinol + NAD(+). In terms of biological role, alternative NADH-ubiquinone oxidoreductase which catalyzes the oxidation of mitochondrial NADH does not translocate protons across the inner mitochondrial membrane. This chain is External alternative NADH-ubiquinone oxidoreductase, mitochondrial (NDH2), found in Yarrowia lipolytica (strain CLIB 122 / E 150) (Yeast).